Here is a 315-residue protein sequence, read N- to C-terminus: Lipoyl synthase (315 aa).

Residues C62, C67, C73, C88, C92, C95, and S302 each contribute to the [4Fe-4S] cluster site. A Radical SAM core domain is found at 73–291 (CFGHGTATFM…GELAKKLGFS (219 aa)).

Belongs to the radical SAM superfamily. Lipoyl synthase family. [4Fe-4S] cluster serves as cofactor.

The protein localises to the cytoplasm. The enzyme catalyses [[Fe-S] cluster scaffold protein carrying a second [4Fe-4S](2+) cluster] + N(6)-octanoyl-L-lysyl-[protein] + 2 oxidized [2Fe-2S]-[ferredoxin] + 2 S-adenosyl-L-methionine + 4 H(+) = [[Fe-S] cluster scaffold protein] + N(6)-[(R)-dihydrolipoyl]-L-lysyl-[protein] + 4 Fe(3+) + 2 hydrogen sulfide + 2 5'-deoxyadenosine + 2 L-methionine + 2 reduced [2Fe-2S]-[ferredoxin]. It participates in protein modification; protein lipoylation via endogenous pathway; protein N(6)-(lipoyl)lysine from octanoyl-[acyl-carrier-protein]: step 2/2. Functionally, catalyzes the radical-mediated insertion of two sulfur atoms into the C-6 and C-8 positions of the octanoyl moiety bound to the lipoyl domains of lipoate-dependent enzymes, thereby converting the octanoylated domains into lipoylated derivatives. The polypeptide is Lipoyl synthase (Coxiella burnetii (strain CbuG_Q212) (Coxiella burnetii (strain Q212))).